The following is a 193-amino-acid chain: Ribonuclease HII (193 aa).

In terms of domain architecture, RNase H type-2 spans 3 to 192 (SLVAGIDEVG…VRAVIDRSSA (190 aa)). A divalent metal cation contacts are provided by D9, E10, and D101.

It belongs to the RNase HII family. Mn(2+) is required as a cofactor. It depends on Mg(2+) as a cofactor.

It is found in the cytoplasm. It catalyses the reaction Endonucleolytic cleavage to 5'-phosphomonoester.. Endonuclease that specifically degrades the RNA of RNA-DNA hybrids. This Methylococcus capsulatus (strain ATCC 33009 / NCIMB 11132 / Bath) protein is Ribonuclease HII.